The chain runs to 313 residues: Tyrosine--tRNA ligase (313 aa).

Y32 provides a ligand contact to L-tyrosine. The 'HIGH' region motif lies at 37-45 (PSGEIHLGH). L-tyrosine is bound by residues Y152, Q156, D159, and Q174. Positions 208-212 (KMSSS) match the 'KMSKS' region motif. S211 contacts ATP.

Belongs to the class-I aminoacyl-tRNA synthetase family. TyrS type 3 subfamily. Homodimer.

The protein localises to the cytoplasm. It catalyses the reaction tRNA(Tyr) + L-tyrosine + ATP = L-tyrosyl-tRNA(Tyr) + AMP + diphosphate + H(+). Catalyzes the attachment of tyrosine to tRNA(Tyr) in a two-step reaction: tyrosine is first activated by ATP to form Tyr-AMP and then transferred to the acceptor end of tRNA(Tyr). In Methanospirillum hungatei JF-1 (strain ATCC 27890 / DSM 864 / NBRC 100397 / JF-1), this protein is Tyrosine--tRNA ligase.